The chain runs to 338 residues: Nicotinate-nucleotide--dimethylbenzimidazole phosphoribosyltransferase (338 aa).

Glu-305 serves as the catalytic Proton acceptor.

This sequence belongs to the CobT family.

It carries out the reaction 5,6-dimethylbenzimidazole + nicotinate beta-D-ribonucleotide = alpha-ribazole 5'-phosphate + nicotinate + H(+). Its pathway is nucleoside biosynthesis; alpha-ribazole biosynthesis; alpha-ribazole from 5,6-dimethylbenzimidazole: step 1/2. In terms of biological role, catalyzes the synthesis of alpha-ribazole-5'-phosphate from nicotinate mononucleotide (NAMN) and 5,6-dimethylbenzimidazole (DMB). The polypeptide is Nicotinate-nucleotide--dimethylbenzimidazole phosphoribosyltransferase (Rhizobium rhizogenes (strain K84 / ATCC BAA-868) (Agrobacterium radiobacter)).